We begin with the raw amino-acid sequence, 416 residues long: Homeobox protein ceh-62 (416 aa).

Positions 103–113 (TPTPIIATPSI) are enriched in low complexity. 2 disordered regions span residues 103–144 (TPTP…QATR) and 178–247 (FQNR…FPPT). Over residues 118-127 (QPLQSPSAPN) the composition is skewed to polar residues. The segment at residues 130–189 (SRRKRTTFSPEQATRLEAEYIGDSYMAREKRHLLAQSLKLSENQVKTWFQNRRAKDKRDR) is a DNA-binding region (homeobox). Residues 193–218 (NASNHTSNSRRSSPSRKSSSDSTPTP) are compositionally biased toward low complexity. Over residues 219 to 240 (TQATQFDMPTQIQTASPPTTAD) the composition is skewed to polar residues.

The protein localises to the nucleus. This chain is Homeobox protein ceh-62, found in Caenorhabditis elegans.